Consider the following 320-residue polypeptide: MARNKIALIGSGMIGGTLAHLAGLKELGDIVLFDIADGIPQGKGLDIAQSSPVEGFDANLTGASDYSAIEGADVCIVTAGVPRKPGMSRDDLLGINLKVMEQVGAGIKKYAPNAFVICITNPLDAMVWALQKFSGLPANKVVGMAGVLDSSRFRLFLAKEFNVSVQDVTAFVLGGHGDTMVPLARYSTVGGIPLTDLVTMGWVTKERLEEIIQRTRDGGAEIVGLLKTGSAYYAPAASAIEMAESYLKDKKRVLPCAAHLTGQYGVKDMYVGVPTVIGAGGVERVIEIDLNKTEKEAFDKSVAAVAGLCEACINIAPALK.

NAD(+) contacts are provided by residues 10-15 (GSGMIG) and D34. Residues R83 and R89 each contribute to the substrate site. NAD(+) contacts are provided by residues N96 and 119–121 (ITN). Residues N121 and R152 each contribute to the substrate site. The active-site Proton acceptor is the H176.

Belongs to the LDH/MDH superfamily. MDH type 3 family.

The enzyme catalyses (S)-malate + NAD(+) = oxaloacetate + NADH + H(+). In terms of biological role, catalyzes the reversible oxidation of malate to oxaloacetate. This chain is Malate dehydrogenase, found in Rhizobium etli (strain CIAT 652).